A 146-amino-acid polypeptide reads, in one-letter code: MSDIQLNTLKPAEGSKHAKRRVGRGIGSGLGKTAGRGHKGQKSRSGGFHKVGFEGGQMPLQRRLPKRGFTPLGQHLYAEVRLSELQLMEAEEIDVQALKAAGVVGQSVRYAKVIKSGELSRKVVLRGITATAGARAAIEAAGGSLA.

A disordered region spans residues 1–56; that stretch reads MSDIQLNTLKPAEGSKHAKRRVGRGIGSGLGKTAGRGHKGQKSRSGGFHKVGFEGG. Residues 24 to 34 are compositionally biased toward gly residues; that stretch reads RGIGSGLGKTA.

This sequence belongs to the universal ribosomal protein uL15 family. Part of the 50S ribosomal subunit.

Functionally, binds to the 23S rRNA. This Bordetella bronchiseptica (strain ATCC BAA-588 / NCTC 13252 / RB50) (Alcaligenes bronchisepticus) protein is Large ribosomal subunit protein uL15.